The following is a 742-amino-acid chain: Conidiogenone synthase (742 aa).

The interval 1 to 332 (MGETIADVYA…SLCVPRYFKV (332 aa)) is terpene cyclase. A Mg(2+)-binding site is contributed by D97. Residues D97, 190–193 (RIVD), N234, 238–242 (SWDKE), and 328–329 (RY) each bind substrate. The DDXXD 1 signature appears at 97–101 (DDETD). The NSE/DTE motif lies at 234–242 (NDLFSWDKE). Residues 333–742 (ERNPYKDHLE…LRAMEEASQK (410 aa)) are prenyltransferase. Residues K414, R417, and H446 each coordinate isopentenyl diphosphate. D453 and D457 together coordinate Mg(2+). The short motif at 453-457 (DDIQD) is the DDXXD 2 element. Dimethylallyl diphosphate is bound at residue R462. Residue R463 participates in isopentenyl diphosphate binding. K539, T540, Q575, N582, K592, and K602 together coordinate dimethylallyl diphosphate. Positions 701 to 724 (EAHKSDSAWKVNQRRAWKGSQKNG) are disordered.

This sequence in the N-terminal section; belongs to the terpene synthase family. It in the C-terminal section; belongs to the FPP/GGPP synthase family. As to quaternary structure, hexamer. It depends on Mg(2+) as a cofactor.

The enzyme catalyses isopentenyl diphosphate + (2E,6E)-farnesyl diphosphate = (2E,6E,10E)-geranylgeranyl diphosphate + diphosphate. It participates in secondary metabolite biosynthesis; terpenoid biosynthesis. Its function is as follows. Bifunctional terpene synthase; part of the gene cluster that mediates the biosynthesis of conidiogenone, a diterpene known to induce the conidiation. The bifunctional terpene synthase PrDS converts isopentenyl diphosphate (IPP) and dimethylallyl diphosphate (DMAPP) into deoxyconidiogenol. The C-terminal prenyltransferase (PT) domain of PrDS catalyzes formation of GGPP, whereas the N-terminal terpene cyclase (TC) domain catalyzes the cyclization of GGPP into deoxyconidiogenol. The cytochrome P450 monooxygenase PrP450 then catalyzes two rounds of oxidation to furnish conidiogenone. The polypeptide is Conidiogenone synthase (Penicillium roqueforti (strain FM164)).